A 150-amino-acid chain; its full sequence is Small ribosomal subunit protein eS6 (150 aa).

The protein belongs to the eukaryotic ribosomal protein eS6 family.

This chain is Small ribosomal subunit protein eS6, found in Caldivirga maquilingensis (strain ATCC 700844 / DSM 13496 / JCM 10307 / IC-167).